Consider the following 500-residue polypeptide: 4-aminobutyrate aminotransferase, mitochondrial (500 aa).

The N-terminal 27 residues, 1-27, are a transit peptide targeting the mitochondrion; that stretch reads MAFLLTTRRLVCSSQKNLHLFTPGSRY. Cys163 is a [2Fe-2S] cluster binding site. 164 to 165 is a pyridoxal 5'-phosphate binding site; the sequence is GS. Cys166 provides a ligand contact to [2Fe-2S] cluster. Substrate is bound at residue Arg220. At Lys231 the chain carries N6-succinyllysine. Lys252 is subject to N6-acetyllysine; alternate. Lys252 bears the N6-succinyllysine; alternate mark. N6-acetyllysine is present on residues Lys279 and Lys318. At Lys357 the chain carries N6-(pyridoxal phosphate)lysine. Thr381 contributes to the pyridoxal 5'-phosphate binding site. Lys413 bears the N6-acetyllysine; alternate mark. Lys413 carries the N6-succinyllysine; alternate modification. N6-acetyllysine occurs at positions 452 and 470.

The protein belongs to the class-III pyridoxal-phosphate-dependent aminotransferase family. As to quaternary structure, homodimer; disulfide-linked. It depends on pyridoxal 5'-phosphate as a cofactor. Requires [2Fe-2S] cluster as cofactor.

Its subcellular location is the mitochondrion matrix. It carries out the reaction 4-aminobutanoate + 2-oxoglutarate = succinate semialdehyde + L-glutamate. It catalyses the reaction (S)-3-amino-2-methylpropanoate + 2-oxoglutarate = 2-methyl-3-oxopropanoate + L-glutamate. In terms of biological role, catalyzes the conversion of gamma-aminobutyrate and L-beta-aminoisobutyrate to succinate semialdehyde and methylmalonate semialdehyde, respectively. Can also convert delta-aminovalerate and beta-alanine. In Rattus norvegicus (Rat), this protein is 4-aminobutyrate aminotransferase, mitochondrial.